A 493-amino-acid polypeptide reads, in one-letter code: Cytoplasmic tRNA 2-thiolation protein 2 (493 aa).

Position 489 is a phosphoserine (Ser489).

The protein belongs to the CTU2/NCS2 family. In terms of assembly, interacts with NCS6 and URM1. May act by forming a heterodimer with NCS6.

It is found in the cytoplasm. Its pathway is tRNA modification; 5-methoxycarbonylmethyl-2-thiouridine-tRNA biosynthesis. In terms of biological role, plays a central role in 2-thiolation of mcm(5)S(2)U at tRNA wobble positions of tRNA(Lys), tRNA(Glu) and tRNA(Gln). May act by forming a heterodimer with NCS6 that ligates sulfur from thiocarboxylated URM1 onto the uridine of tRNAs at wobble position. Prior mcm(5) tRNA modification by the elongator complex is required for 2-thiolation. May also be involved in protein urmylation. The protein is Cytoplasmic tRNA 2-thiolation protein 2 of Saccharomyces cerevisiae (strain YJM789) (Baker's yeast).